Consider the following 79-residue polypeptide: Small ribosomal subunit protein bS18 (79 aa).

It belongs to the bacterial ribosomal protein bS18 family. In terms of assembly, part of the 30S ribosomal subunit. Forms a tight heterodimer with protein bS6.

Functionally, binds as a heterodimer with protein bS6 to the central domain of the 16S rRNA, where it helps stabilize the platform of the 30S subunit. This chain is Small ribosomal subunit protein bS18, found in Blochmanniella pennsylvanica (strain BPEN).